The sequence spans 413 residues: Putative ankyrin repeat protein L92 (413 aa).

ANK repeat units lie at residues 1-28 (MCAC…DINC), 32-67 (DGMS…DVNL), 68-104 (TVDG…LFES), 105-134 (DDDD…NIEA), 137-170 (DGET…KTNI), 174-208 (DRKT…NINY), 212-242 (IGET…NPNI), and 246-275 (SGNT…SPEI).

The sequence is that of Putative ankyrin repeat protein L92 from Acanthamoeba polyphaga mimivirus (APMV).